Reading from the N-terminus, the 311-residue chain is Methionyl-tRNA formyltransferase (311 aa).

Residue 112 to 115 (SLLP) participates in (6S)-5,6,7,8-tetrahydrofolate binding.

This sequence belongs to the Fmt family.

It carries out the reaction L-methionyl-tRNA(fMet) + (6R)-10-formyltetrahydrofolate = N-formyl-L-methionyl-tRNA(fMet) + (6S)-5,6,7,8-tetrahydrofolate + H(+). Functionally, attaches a formyl group to the free amino group of methionyl-tRNA(fMet). The formyl group appears to play a dual role in the initiator identity of N-formylmethionyl-tRNA by promoting its recognition by IF2 and preventing the misappropriation of this tRNA by the elongation apparatus. The chain is Methionyl-tRNA formyltransferase from Chelativorans sp. (strain BNC1).